Reading from the N-terminus, the 139-residue chain is MSLTRHEIREKAFQALFALNANPDADENQLFQQLLNPEETDAVEIPAYLSTLVTGVREHQVELDAQIQPYLSQKWSLDRLAKTDLIILRIAFFELQFVDDVPTKVAVNEAIELTKAFSDDRSRKFVSGVLGKVVKNQAN.

It belongs to the NusB family.

In terms of biological role, involved in transcription antitermination. Required for transcription of ribosomal RNA (rRNA) genes. Binds specifically to the boxA antiterminator sequence of the ribosomal RNA (rrn) operons. In Lactiplantibacillus plantarum (strain ATCC BAA-793 / NCIMB 8826 / WCFS1) (Lactobacillus plantarum), this protein is Transcription antitermination protein NusB.